Consider the following 270-residue polypeptide: Type II restriction enzyme CeqI (270 aa).

It catalyses the reaction Endonucleolytic cleavage of DNA to give specific double-stranded fragments with terminal 5'-phosphates.. In terms of biological role, a P subtype restriction enzyme that recognizes the double-stranded sequence 5'-GATATC-3' and cleaves after T-3. This Rhodococcus hoagii (Corynebacterium equii) protein is Type II restriction enzyme CeqI (ceqIR).